Consider the following 563-residue polypeptide: Putative solute carrier family 26 member 10P (563 aa).

5 consecutive transmembrane segments (helical) span residues 45-65 (ALLA…PVLI), 75-91 (LSTG…GSAV), 116-136 (VGVA…MFVL), 152-172 (ALTS…LLGL), and 352-372 (LAGL…GPFF). The STAS domain occupies 406 to 541 (RVDFLLQVPG…VSVQDAAAYA (136 aa)).

The protein belongs to the SLC26A/SulP transporter (TC 2.A.53) family.

The protein resides in the membrane. Chloride/bicarbonate exchanger. This Homo sapiens (Human) protein is Putative solute carrier family 26 member 10P (SLC26A10P).